An 816-amino-acid chain; its full sequence is Neuroligin-4, X-linked (816 aa).

The first 41 residues, 1–41, serve as a signal peptide directing secretion; sequence MSRPQGLLWLPLLFTPVCVMLNSNVLLWLTALAIKFTLIDS. The Extracellular segment spans residues 42-676; the sequence is QAQYPVVNTN…TKRDYSTELS (635 aa). N-linked (GlcNAc...) asparagine glycosylation occurs at Asn-102. 2 disulfide bridges follow: Cys-110/Cys-146 and Cys-306/Cys-317. The tract at residues 359–364 is interaction with NRXN1; it reads QGEFLN. A disulfide bridge links Cys-476 with Cys-510. An N-linked (GlcNAc...) asparagine glycan is attached at Asn-511. Residues 636–659 are disordered; sequence TKRPAITPANNPKHSKDPHKTGPE. The segment covering 649 to 658 has biased composition (basic and acidic residues); that stretch reads HSKDPHKTGP. The chain crosses the membrane as a helical span at residues 677 to 697; it reads VTIAVGASLLFLNILAFAALY. Topologically, residues 698–816 are cytoplasmic; the sequence is YKKDKRRHET…LPHGHSTTRV (119 aa). Ser-712 is modified (phosphoserine).

This sequence belongs to the type-B carboxylesterase/lipase family. Homodimer. Interacts with NRXN1 in a calcium-dependent manner. Interaction with neurexins is mediated by heparan sulfate glycan modification on neurexin. Interacts through its C-terminus with DLG4/PSD-95 third PDZ domain. In terms of tissue distribution, expressed at highest levels in heart. Expressed at lower levels in liver, skeletal muscle and pancreas and at very low levels in brain.

It is found in the cell membrane. It localises to the postsynaptic density membrane. Cell surface protein involved in cell-cell-interactions via its interactions with neurexin family members. The protein is Neuroligin-4, X-linked (NLGN4X) of Homo sapiens (Human).